Reading from the N-terminus, the 1687-residue chain is Zinc finger protein 142 (1687 aa).

Disordered stretches follow at residues 1 to 23 and 83 to 150; these read MTDP…LCPE and TLTP…RLEG. Basic and acidic residues predominate over residues 125-140; it reads KEEKSDTQKDSQKAVD. The residue at position 154 (S154) is a Phosphoserine. 3 consecutive C2H2-type zinc fingers follow at residues 163–185, 219–242, and 253–275; these read HMCP…LHLH, HHCP…ASMH, and YACP…LKSH. Residues 286–311 form a C2H2-type 4; atypical zinc finger; sequence LRCFQEGCSYAAPDRKAFIKHLKETH. 10 consecutive C2H2-type zinc fingers follow at residues 316 to 340, 343 to 366, 372 to 395, 401 to 423, 429 to 451, 457 to 479, 485 to 507, 512 to 536, 544 to 567, and 573 to 596; these read VECR…HKSH, FHCP…KQGH, LRCT…GKMH, HQCP…MLLH, HKCE…MLTH, YMCT…MRKH, YQCN…KLRH, LMCE…SQHH, YPCH…NCKH, and FHCA…RKAH. A Glycyl lysine isopeptide (Lys-Gly) (interchain with G-Cter in SUMO2) cross-link involves residue K594. Disordered regions lie at residues 613–690, 704–798, 897–935, 947–1014, and 1052–1092; these read EPEG…EVEE, LESV…PPLP, KGLP…EAEL, REPE…SPTE, and GRGG…GDGD. Over residues 725–739 the composition is skewed to low complexity; the sequence is PLGLEGPDGLEGPEL. The segment covering 1061 to 1075 has biased composition (polar residues); sequence TPQTQPDVSPLSNGD. A compositionally biased stretch (low complexity) spans 1082-1092; sequence GSTESSSGDGD. C2H2-type zinc fingers lie at residues 1135–1158, 1171–1194, 1200–1222, 1228–1251, 1257–1280, 1286–1309, 1328–1351, 1354–1377, 1380–1403, 1424–1446, 1452–1474, 1480–1502, 1508–1530, 1536–1559, and 1565–1587; these read LHCS…KRRH, LQCG…RLKH, HQCP…QSRH, IPCS…LRVH, HFCP…NSCH, FACS…LRRH, LHCS…RKQH, LECG…RQQH, HRCQ…LEQH, LHCP…VKGH, YKCT…SRIH, YHCH…MRIH, YLCP…MTKH, YQCP…ETRH, and FMCE…LRKH. K1193 participates in a covalent cross-link: Glycyl lysine isopeptide (Lys-Gly) (interchain with G-Cter in SUMO2). K1242 is covalently cross-linked (Glycyl lysine isopeptide (Lys-Gly) (interchain with G-Cter in SUMO2)). K1591 is covalently cross-linked (Glycyl lysine isopeptide (Lys-Gly) (interchain with G-Cter in SUMO2)). 2 C2H2-type zinc fingers span residues 1593-1615 and 1621-1643; these read YVCN…ALTH and FFCR…VRRH. The segment at 1638–1687 is disordered; the sequence is KHVRRHHPDQADPNQGVGKDPTTPTVHLHDVQLEDPSPPAPAAPHTGPEG.

It belongs to the krueppel C2H2-type zinc-finger protein family.

The protein localises to the nucleus. May be involved in transcriptional regulation. The sequence is that of Zinc finger protein 142 from Homo sapiens (Human).